The sequence spans 235 residues: MLKKKIPYITAILPAAGTGKRMKSLLPKQYCTIGDKTLIEHSMNALLCQSCIRHCIVVINARDHWFRQLSISYDPRVSVVVGGHTRADSVMAGLQHVKKSVWVIVHDAVRPCLHHEDLLRLFEITKFSQVGGILAIPICNTIKRTYCGTNFIRYTVNRENLWHALTPQLFNYDLLKYCLKKALKNRVTVTDEASALEYCGYKSIVIHGRSDNIKVTHQNDLKLANFYLSKLYKKT.

The protein belongs to the IspD/TarI cytidylyltransferase family. IspD subfamily. In terms of assembly, homodimer.

It carries out the reaction 2-C-methyl-D-erythritol 4-phosphate + CTP + H(+) = 4-CDP-2-C-methyl-D-erythritol + diphosphate. The protein operates within isoprenoid biosynthesis; isopentenyl diphosphate biosynthesis via DXP pathway; isopentenyl diphosphate from 1-deoxy-D-xylulose 5-phosphate: step 2/6. Functionally, catalyzes the formation of 4-diphosphocytidyl-2-C-methyl-D-erythritol from CTP and 2-C-methyl-D-erythritol 4-phosphate (MEP). In Blochmanniella pennsylvanica (strain BPEN), this protein is 2-C-methyl-D-erythritol 4-phosphate cytidylyltransferase.